Consider the following 312-residue polypeptide: Ribosomal RNA small subunit methyltransferase H (312 aa).

S-adenosyl-L-methionine is bound by residues 37–39, Asp57, Phe83, and Asp104; that span reads GGH.

The protein belongs to the methyltransferase superfamily. RsmH family.

It is found in the cytoplasm. The catalysed reaction is cytidine(1402) in 16S rRNA + S-adenosyl-L-methionine = N(4)-methylcytidine(1402) in 16S rRNA + S-adenosyl-L-homocysteine + H(+). In terms of biological role, specifically methylates the N4 position of cytidine in position 1402 (C1402) of 16S rRNA. This Malacoplasma penetrans (strain HF-2) (Mycoplasma penetrans) protein is Ribosomal RNA small subunit methyltransferase H.